The primary structure comprises 663 residues: UvrABC system protein B (663 aa).

A compositionally biased stretch (basic and acidic residues) spans 1–10 (MIDKRDDKPF). The disordered stretch occupies residues 1 to 23 (MIDKRDDKPFKLKSKYKPSGDQP). The 241-residue stretch at 31–271 (DNIEGGEKAQ…EQSIAKIQAE (241 aa)) folds into the Helicase ATP-binding domain. 44-51 (GATGTGKT) lines the ATP pocket. Residues 97-120 (YYDYYQPEAYVPSSDTYIEKDSSV) carry the Beta-hairpin motif. Residues 435 to 601 (QMDDLLGEIN…TIKKDIRGLI (167 aa)) enclose the Helicase C-terminal domain. The region spanning 627 to 662 (KEAINALQKQMQEAAELLDFELAAQMRDLILELKLM) is the UVR domain.

It belongs to the UvrB family. As to quaternary structure, forms a heterotetramer with UvrA during the search for lesions. Interacts with UvrC in an incision complex.

It localises to the cytoplasm. Functionally, the UvrABC repair system catalyzes the recognition and processing of DNA lesions. A damage recognition complex composed of 2 UvrA and 2 UvrB subunits scans DNA for abnormalities. Upon binding of the UvrA(2)B(2) complex to a putative damaged site, the DNA wraps around one UvrB monomer. DNA wrap is dependent on ATP binding by UvrB and probably causes local melting of the DNA helix, facilitating insertion of UvrB beta-hairpin between the DNA strands. Then UvrB probes one DNA strand for the presence of a lesion. If a lesion is found the UvrA subunits dissociate and the UvrB-DNA preincision complex is formed. This complex is subsequently bound by UvrC and the second UvrB is released. If no lesion is found, the DNA wraps around the other UvrB subunit that will check the other stand for damage. This chain is UvrABC system protein B, found in Streptococcus pyogenes serotype M4 (strain MGAS10750).